The primary structure comprises 351 residues: Methylthioribose-1-phosphate isomerase (351 aa).

Residues 51 to 53, Arg-94, and Gln-199 each bind substrate; that span reads RGA. Asp-240 functions as the Proton donor in the catalytic mechanism. 250–251 provides a ligand contact to substrate; sequence NK.

It belongs to the EIF-2B alpha/beta/delta subunits family. MtnA subfamily. Homodimer.

The enzyme catalyses 5-(methylsulfanyl)-alpha-D-ribose 1-phosphate = 5-(methylsulfanyl)-D-ribulose 1-phosphate. Its pathway is amino-acid biosynthesis; L-methionine biosynthesis via salvage pathway; L-methionine from S-methyl-5-thio-alpha-D-ribose 1-phosphate: step 1/6. Its function is as follows. Catalyzes the interconversion of methylthioribose-1-phosphate (MTR-1-P) into methylthioribulose-1-phosphate (MTRu-1-P). The protein is Methylthioribose-1-phosphate isomerase of Bacillus thuringiensis (strain Al Hakam).